We begin with the raw amino-acid sequence, 1373 residues long: DNA-directed RNA polymerase subunit beta (1373 aa).

This sequence belongs to the RNA polymerase beta chain family. In terms of assembly, the RNAP catalytic core consists of 2 alpha, 1 beta, 1 beta' and 1 omega subunit. When a sigma factor is associated with the core the holoenzyme is formed, which can initiate transcription.

It catalyses the reaction RNA(n) + a ribonucleoside 5'-triphosphate = RNA(n+1) + diphosphate. DNA-dependent RNA polymerase catalyzes the transcription of DNA into RNA using the four ribonucleoside triphosphates as substrates. The polypeptide is DNA-directed RNA polymerase subunit beta (Lawsonia intracellularis (strain PHE/MN1-00)).